We begin with the raw amino-acid sequence, 323 residues long: D-alanine--D-alanine ligase (323 aa).

The ATP-grasp domain occupies 120–319 (LSVLKPYGIK…LEDLFTNAIE (200 aa)). 148 to 203 (VKKVGLPCFVKPNKAGSSFGISKVKSEAELPIAIEVAYKEDNEIIIESFLDGTEVS) is a binding site for ATP. Mg(2+) contacts are provided by glutamate 274, glutamate 286, and asparagine 288.

The protein belongs to the D-alanine--D-alanine ligase family. Mg(2+) is required as a cofactor. The cofactor is Mn(2+).

It localises to the cytoplasm. The enzyme catalyses 2 D-alanine + ATP = D-alanyl-D-alanine + ADP + phosphate + H(+). The protein operates within cell wall biogenesis; peptidoglycan biosynthesis. Cell wall formation. The protein is D-alanine--D-alanine ligase of Flavobacterium johnsoniae (strain ATCC 17061 / DSM 2064 / JCM 8514 / BCRC 14874 / CCUG 350202 / NBRC 14942 / NCIMB 11054 / UW101) (Cytophaga johnsonae).